Consider the following 612-residue polypeptide: MAAPEGSGLGEDARLDQETAQWLHWDKNSLTLEAVKRLIAEGNEEELRKCFGARMEFGTAGLRAAMGPGISRMNDLTIIQTTQGFCRYLEKQFSDLKQKGIVISFDARAHPSSGGSSRRFARLAATTFISQGIPVYLFSDITPTPFVPFTVSRLKLCAGIMITASHNPKQDNGYKVYWDNGAQIISPHDKGISQAIEENLEPWPQAWDDSLIDSSPLLHNPSASINNDYFEDLKKYCFHRSVNRETKVKFVHTSVHGVGHSFVQSAFKAFDLVPPEAVPEQKDPDPEFPTVKYPNPEEGKGVLTLSFALADKTKARIVLANDPDADRLAVAEKQDSGEWRVFSGNELGALLGWWLFTSWKEKNQDRSALKDTYMLSSTVSSKILRAIALKEGFHFEETLTGFKWMGNRAKQLIDQGKTVLFAFEEAIGYMCCPFVLDKDGVSAAVISAELASFLATKNLSLSQQLKAIYVEYGYHITKASYFICHDQDTIKKLFENLRSYDGKNNYPKACGKFEISAIRDLTTGYDDNQPDKKAVLPTSKSSQMITFTFANGGVATMRTSGTEPKIKYYAELCAPPGNSDPEQLKKELNELVSAIEEHFFQPQKYNLQPKAD.

Ala2 is modified (N-acetylalanine). The alpha-D-glucose 1,6-bisphosphate site is built by Arg63 and Ser165. The active-site Phosphoserine intermediate is Ser165. Positions 165, 322, 324, and 326 each coordinate Mg(2+). Ser165 bears the Phosphoserine mark. Positions 326, 327, 400, 424, and 438 each coordinate alpha-D-glucose 1,6-bisphosphate.

This sequence belongs to the phosphohexose mutase family. As to quaternary structure, monomer. It depends on Mg(2+) as a cofactor.

It localises to the cytoplasm. The protein resides in the cytosol. The catalysed reaction is alpha-D-ribose 1-phosphate = D-ribose 5-phosphate. The enzyme catalyses 2-deoxy-alpha-D-ribose 1-phosphate = 2-deoxy-D-ribose 5-phosphate. It catalyses the reaction alpha-D-glucose 1-phosphate = alpha-D-glucose 6-phosphate. It carries out the reaction O-phospho-L-seryl-[protein] + alpha-D-glucose 1-phosphate = alpha-D-glucose 1,6-bisphosphate + L-seryl-[protein]. The catalysed reaction is alpha-D-glucose 1,6-bisphosphate + L-seryl-[protein] = O-phospho-L-seryl-[protein] + alpha-D-glucose 6-phosphate. Catalyzes the conversion of the nucleoside breakdown products ribose-1-phosphate and deoxyribose-1-phosphate to the corresponding 5-phosphopentoses. Catalyzes the reversible isomerization of alpha-D-glucose 1-phosphate to alpha-D-glucose 6-phosphate but with a lower catalytic efficiency. The mechanism proceeds via the intermediate compound alpha-D-glucose 1,6-bisphosphate. In vitro, also has a low glucose 1,6-bisphosphate synthase activity which is most probably not physiologically relevant. The chain is Phosphopentomutase (PGM2) from Pongo abelii (Sumatran orangutan).